The following is a 264-amino-acid chain: tRNA (guanine-N(1)-)-methyltransferase (264 aa).

S-adenosyl-L-methionine contacts are provided by residues Gly125 and 145–150; that span reads LGDFVL.

The protein belongs to the RNA methyltransferase TrmD family. As to quaternary structure, homodimer.

It localises to the cytoplasm. The catalysed reaction is guanosine(37) in tRNA + S-adenosyl-L-methionine = N(1)-methylguanosine(37) in tRNA + S-adenosyl-L-homocysteine + H(+). Specifically methylates guanosine-37 in various tRNAs. This is tRNA (guanine-N(1)-)-methyltransferase from Burkholderia vietnamiensis (strain G4 / LMG 22486) (Burkholderia cepacia (strain R1808)).